A 241-amino-acid polypeptide reads, in one-letter code: Antimicrobial ginkbilobin-2-like protein (241 aa).

An N-terminal signal peptide occupies residues 1 to 23; the sequence is MLSSKYISVSFLLLSLSLHAVNC. 2 consecutive Gnk2-homologous domains span residues 25 to 127 and 133 to 238; these read DPLY…NIDF and NKNK…LYPF. Intrachain disulfides connect Cys81/Cys90, Cys93/Cys118, Cys192/Cys201, and Cys204/Cys229. Asn89 is a glycosylation site (N-linked (GlcNAc...) asparagine).

The protein belongs to the cysteine-rich repeat secretory protein family.

Its subcellular location is the secreted. In terms of biological role, possesses antimicrobial activity toward the oomycete Phytophthora cinnamomi (ink disease agent), thus reducing its growth rate and confering an increased resistance to the plant. This chain is Antimicrobial ginkbilobin-2-like protein, found in Castanea crenata (Japanese chestnut).